A 306-amino-acid chain; its full sequence is MTASLHIILDTDPGIDDAAAIAAALFAPQLDLQLITTVAGNVSVEKTTRNALQLLHFWNSDIPLAQGAATPLLRPLRDAAYVHGESGMEGYDFVDHQRQPLAKPAFIAIRDVLMNAPEPMTLVAIGPLTNIALLLMHYPECACNIRRLVLMGGSAGRGNFTPNAEFNIAVDPEAAALVFRSGLEIVMCGLDVTNQAMLSPDFLNKLPALNRTGKMLHSLFNHYRSGSMRTGVRMHDLCAIAWLVRPELFTLQSCFVAVETQGQYTAGTTVVDIEGRLGQPANAQVALALDVDGFRQWVAEVFAYAP.

His-235 is an active-site residue.

The protein belongs to the IUNH family. RihC subfamily.

Its function is as follows. Hydrolyzes both purine and pyrimidine ribonucleosides with a broad-substrate specificity. The protein is Non-specific ribonucleoside hydrolase RihC of Salmonella dublin (strain CT_02021853).